Reading from the N-terminus, the 142-residue chain is Large ribosomal subunit protein uL13 (142 aa).

It belongs to the universal ribosomal protein uL13 family. As to quaternary structure, part of the 50S ribosomal subunit.

Functionally, this protein is one of the early assembly proteins of the 50S ribosomal subunit, although it is not seen to bind rRNA by itself. It is important during the early stages of 50S assembly. This Xylella fastidiosa (strain M23) protein is Large ribosomal subunit protein uL13.